Reading from the N-terminus, the 714-residue chain is K(+)-insensitive pyrophosphate-energized proton pump (714 aa).

Positions 1–20 (MRMTVIPIVILCGVLSVVYA) are cleaved as a signal peptide. 4 consecutive transmembrane segments (helical) span residues 52–74 (LTRQ…WYLL), 85–105 (GAVL…RANL), 128–148 (ITGM…YFVL), and 166–186 (VSLG…GGIF). Substrate is bound at residue lysine 188. Mg(2+) is bound by residues aspartate 191, aspartate 195, asparagine 218, and aspartate 221. 6 consecutive transmembrane segments (helical) span residues 238–258 (AVSV…TPIL), 263–283 (VYPL…TFFV), 298–318 (GLIA…YATV), 333–353 (GTNL…IVVI), 383–403 (GLAV…GGII), and 411–431 (LFGT…IVAL). Aspartate 439 contacts Mg(2+). 4 consecutive transmembrane segments (helical) span residues 470 to 490 (AVTK…LFAA), 522 to 542 (YVVA…GIAM), 591 to 611 (VIPS…VLLI), and 618 to 638 (AFAA…FVAI). Ca(2+) is bound by residues aspartate 648, aspartate 680, and aspartate 684. Lysine 687 is a substrate binding site. A helical transmembrane segment spans residues 693-713 (AVNPAIKITNIVALLLLAVLA).

The protein belongs to the H(+)-translocating pyrophosphatase (TC 3.A.10) family. K(+)-insensitive subfamily. Homodimer. Requires Mg(2+) as cofactor.

The protein localises to the acidocalcisome membrane. It catalyses the reaction diphosphate + H2O + H(+)(in) = 2 phosphate + 2 H(+)(out). In terms of biological role, proton pump that utilizes the energy of pyrophosphate hydrolysis as the driving force for proton movement across the membrane. Generates a proton motive force. In Agrobacterium fabrum (strain C58 / ATCC 33970) (Agrobacterium tumefaciens (strain C58)), this protein is K(+)-insensitive pyrophosphate-energized proton pump.